The chain runs to 631 residues: tRNA uridine 5-carboxymethylaminomethyl modification enzyme MnmG (631 aa).

FAD-binding positions include 13–18 (GGGHAG), valine 125, and serine 180. 273 to 287 (GPRYCPSIEDKVMRF) is a binding site for NAD(+). An FAD-binding site is contributed by glutamine 370.

It belongs to the MnmG family. Homodimer. Heterotetramer of two MnmE and two MnmG subunits. FAD is required as a cofactor.

Its subcellular location is the cytoplasm. Its function is as follows. NAD-binding protein involved in the addition of a carboxymethylaminomethyl (cmnm) group at the wobble position (U34) of certain tRNAs, forming tRNA-cmnm(5)s(2)U34. The chain is tRNA uridine 5-carboxymethylaminomethyl modification enzyme MnmG from Vibrio parahaemolyticus serotype O3:K6 (strain RIMD 2210633).